The chain runs to 208 residues: ATP synthase subunit b (208 aa).

A compositionally biased stretch (polar residues) spans 1–18 (MFVSTAFAQTATESQPAS). Residues 1-26 (MFVSTAFAQTATESQPASTAGEHGAA) form a disordered region. A helical transmembrane segment spans residues 56–78 (SQVLWLAITFGLFYLFLSRVVLP).

This sequence belongs to the ATPase B chain family. F-type ATPases have 2 components, F(1) - the catalytic core - and F(0) - the membrane proton channel. F(1) has five subunits: alpha(3), beta(3), gamma(1), delta(1), epsilon(1). F(0) has three main subunits: a(1), b(2) and c(10-14). The alpha and beta chains form an alternating ring which encloses part of the gamma chain. F(1) is attached to F(0) by a central stalk formed by the gamma and epsilon chains, while a peripheral stalk is formed by the delta and b chains.

It is found in the cell inner membrane. Its function is as follows. F(1)F(0) ATP synthase produces ATP from ADP in the presence of a proton or sodium gradient. F-type ATPases consist of two structural domains, F(1) containing the extramembraneous catalytic core and F(0) containing the membrane proton channel, linked together by a central stalk and a peripheral stalk. During catalysis, ATP synthesis in the catalytic domain of F(1) is coupled via a rotary mechanism of the central stalk subunits to proton translocation. Functionally, component of the F(0) channel, it forms part of the peripheral stalk, linking F(1) to F(0). In Brucella melitensis biotype 1 (strain ATCC 23456 / CCUG 17765 / NCTC 10094 / 16M), this protein is ATP synthase subunit b.